The primary structure comprises 347 residues: UDP-N-acetylenolpyruvoylglucosamine reductase (347 aa).

The region spanning 17–187 is the FAD-binding PCMH-type domain; it reads IEQLAAQLVV…TAVGLKFAKA (171 aa). R163 is a catalytic residue. Residue S232 is the Proton donor of the active site. Residue E327 is part of the active site.

The protein belongs to the MurB family. FAD is required as a cofactor.

It localises to the cytoplasm. The catalysed reaction is UDP-N-acetyl-alpha-D-muramate + NADP(+) = UDP-N-acetyl-3-O-(1-carboxyvinyl)-alpha-D-glucosamine + NADPH + H(+). It participates in cell wall biogenesis; peptidoglycan biosynthesis. Its function is as follows. Cell wall formation. The sequence is that of UDP-N-acetylenolpyruvoylglucosamine reductase from Vibrio cholerae serotype O1 (strain ATCC 39541 / Classical Ogawa 395 / O395).